A 345-amino-acid chain; its full sequence is Phosphoribosylformylglycinamidine cyclo-ligase (345 aa).

This sequence belongs to the AIR synthase family.

The protein localises to the cytoplasm. The enzyme catalyses 2-formamido-N(1)-(5-O-phospho-beta-D-ribosyl)acetamidine + ATP = 5-amino-1-(5-phospho-beta-D-ribosyl)imidazole + ADP + phosphate + H(+). The protein operates within purine metabolism; IMP biosynthesis via de novo pathway; 5-amino-1-(5-phospho-D-ribosyl)imidazole from N(2)-formyl-N(1)-(5-phospho-D-ribosyl)glycinamide: step 2/2. This Escherichia coli (strain K12 / MC4100 / BW2952) protein is Phosphoribosylformylglycinamidine cyclo-ligase.